The following is a 148-amino-acid chain: 3-hydroxyacyl-[acyl-carrier-protein] dehydratase FabZ (148 aa).

His-49 is an active-site residue.

Belongs to the thioester dehydratase family. FabZ subfamily.

The protein resides in the cytoplasm. The catalysed reaction is a (3R)-hydroxyacyl-[ACP] = a (2E)-enoyl-[ACP] + H2O. Involved in unsaturated fatty acids biosynthesis. Catalyzes the dehydration of short chain beta-hydroxyacyl-ACPs and long chain saturated and unsaturated beta-hydroxyacyl-ACPs. The protein is 3-hydroxyacyl-[acyl-carrier-protein] dehydratase FabZ of Ehrlichia canis (strain Jake).